Consider the following 247-residue polypeptide: Probable transcriptional regulatory protein GM21_0933 (247 aa).

It belongs to the TACO1 family.

The protein resides in the cytoplasm. This Geobacter sp. (strain M21) protein is Probable transcriptional regulatory protein GM21_0933.